Reading from the N-terminus, the 318-residue chain is L-lactate dehydrogenase (318 aa).

Residues Val-17, Asp-38, Lys-43, Tyr-69, and 83 to 84 (GA) contribute to the NAD(+) site. Residues Gln-86 and Arg-92 each coordinate substrate. Residues Ser-105, 122–124 (ATN), and Ser-147 contribute to the NAD(+) site. Substrate is bound at residue 124-127 (NPVD). 152-155 (DTAR) serves as a coordination point for substrate. Residues Lys-157 and His-172 each coordinate beta-D-fructose 1,6-bisphosphate. Catalysis depends on His-179, which acts as the Proton acceptor. Tyr-223 carries the phosphotyrosine modification. Thr-232 serves as a coordination point for substrate.

This sequence belongs to the LDH/MDH superfamily. LDH family. In terms of assembly, homotetramer.

The protein localises to the cytoplasm. It carries out the reaction (S)-lactate + NAD(+) = pyruvate + NADH + H(+). It participates in fermentation; pyruvate fermentation to lactate; (S)-lactate from pyruvate: step 1/1. Allosterically activated by fructose 1,6-bisphosphate (FBP). Catalyzes the conversion of lactate to pyruvate. The chain is L-lactate dehydrogenase from Staphylococcus saprophyticus subsp. saprophyticus (strain ATCC 15305 / DSM 20229 / NCIMB 8711 / NCTC 7292 / S-41).